We begin with the raw amino-acid sequence, 353 residues long: Paraneoplastic antigen Ma1 homolog (353 aa).

This sequence belongs to the PNMA family. In terms of tissue distribution, testis and brain specific.

The protein localises to the nucleus. It localises to the nucleolus. The polypeptide is Paraneoplastic antigen Ma1 homolog (Pnma1) (Rattus norvegicus (Rat)).